A 192-amino-acid polypeptide reads, in one-letter code: A-type ATP synthase subunit E (192 aa).

It belongs to the V-ATPase E subunit family. As to quaternary structure, has multiple subunits with at least A(3), B(3), C, D, E, F, H, I and proteolipid K(x).

Its subcellular location is the cell membrane. Its function is as follows. Component of the A-type ATP synthase that produces ATP from ADP in the presence of a proton gradient across the membrane. This is A-type ATP synthase subunit E from Methanoculleus marisnigri (strain ATCC 35101 / DSM 1498 / JR1).